The primary structure comprises 678 residues: MNFSVLPPEINSALMFAGAGPGPMLAAASAWTGLAGDLGSAAASFSAVTSQLATGSWQGPASAAMTGVAASYARWLTTAAAQAEQAAGQAQAAVSAFEAALAATVHPGAVSANRGRLRSLVASNLLGQNAPAIAAVEAVYEQMWAADVAAMLGYHGEASAVALSLTPFTPSPSAAATPGGAVIIAGFPFLDLGNVTIGGFNLASGNLGLGNLGSFNPGSANTGSVNLGNANIGDLNLGSGNIGSYNLGGGNTGDLNPDSGNTGTLNWGSGNIGSYNLGGGNLGSYNLGSGNTGDTNFGGGNTGNLNVGGGNTGNSNFGFGNTGNVNFGNGNTGDTNFGSGNLGSGNIGFGNKGSHNIGFGNSGNNNIGFGLTGDNQIGFGALNSGSGNLGFGNSGNGNIGFFNSGNNNIGMGNSGNGVGALSVEFGSSAERSSGFGNSGELSTGIGNSGQLSTGWFNSATTSTGWFNSGTTNTGWFNSGTTNTGIGNSGGNLVTGSMGLFNSGHTNTGSFNAGSMNTGDFNSGNVNTGYFNSGNINTGFFNSGDLNTGLFNSVNQPVQNSGWLHTGTNNSGYANAGTFNSGFDNNARDEHAEFVTGNSGLANVGNYNAGIINVGDHLSGFRNSVPTITGTANISGFVNAGTSISGFFNFGSLMSGFANFDDEVSGYLNGDSRASGWIH.

2 helical membrane-spanning segments follow: residues 14–34 (LMFA…WTGL) and 180–200 (GAVI…IGGF).

Belongs to the mycobacterial PPE family.

It is found in the cell membrane. This is an uncharacterized protein from Mycobacterium tuberculosis (strain ATCC 25618 / H37Rv).